The primary structure comprises 264 residues: Tryptophan synthase alpha chain (264 aa).

Active-site proton acceptor residues include glutamate 49 and aspartate 60.

The protein belongs to the TrpA family. As to quaternary structure, tetramer of two alpha and two beta chains.

It catalyses the reaction (1S,2R)-1-C-(indol-3-yl)glycerol 3-phosphate + L-serine = D-glyceraldehyde 3-phosphate + L-tryptophan + H2O. It functions in the pathway amino-acid biosynthesis; L-tryptophan biosynthesis; L-tryptophan from chorismate: step 5/5. Functionally, the alpha subunit is responsible for the aldol cleavage of indoleglycerol phosphate to indole and glyceraldehyde 3-phosphate. The polypeptide is Tryptophan synthase alpha chain (Laribacter hongkongensis (strain HLHK9)).